The primary structure comprises 124 residues: Cholera enterotoxin subunit B (124 aa).

Residues 1-21 (MIKLKFGVFFTVLLSSAYAHG) form the signal peptide. Cysteines 30 and 107 form a disulfide.

The holotoxin (choleragen) consists of a pentameric ring of B subunits whose central pore is occupied by the A subunit. The A subunit contains two chains, A1 and A2, linked by a disulfide bridge.

It localises to the secreted. The protein localises to the host cell membrane. Functionally, the B subunit pentameric ring directs the A subunit to its target by binding to the GM1 gangliosides present on the surface of the intestinal epithelial cells. It can bind five GM1 gangliosides. It has no toxic activity by itself. This chain is Cholera enterotoxin subunit B (ctxB), found in Vibrio cholerae serotype O1 (strain ATCC 39315 / El Tor Inaba N16961).